A 178-amino-acid polypeptide reads, in one-letter code: Probable major fimbrial subunit LpfA (178 aa).

A signal peptide spans 1–24; it reads MEFFMKKVVFALTALALTSGTVFA.

The protein belongs to the fimbrial protein family.

It localises to the fimbrium. Functionally, part of the lpfABCC'DE fimbrial operon. LP fimbriae may participate in the interaction with eukaryotic cells by assisting in microcolony formation. The chain is Probable major fimbrial subunit LpfA (lpfA) from Escherichia coli O157:H7.